A 66-amino-acid polypeptide reads, in one-letter code: MKPGIHPEYKKVIVRCACGNEFESGSVKDELRVEICSECHPFFTGRQKFVSAAGRVDKFNKKYGLK.

Zn(2+) is bound by residues C16, C18, C36, and C39.

It belongs to the bacterial ribosomal protein bL31 family. Type A subfamily. In terms of assembly, part of the 50S ribosomal subunit. Requires Zn(2+) as cofactor.

Binds the 23S rRNA. This Geobacillus sp. (strain WCH70) protein is Large ribosomal subunit protein bL31.